A 151-amino-acid chain; its full sequence is Nucleoside diphosphate kinase (151 aa).

ATP is bound by residues Lys-11, Phe-59, Arg-87, Thr-93, Arg-104, and Asn-114. His-117 (pros-phosphohistidine intermediate) is an active-site residue.

This sequence belongs to the NDK family. As to quaternary structure, homotetramer. Requires Mg(2+) as cofactor.

It localises to the cytoplasm. The enzyme catalyses a 2'-deoxyribonucleoside 5'-diphosphate + ATP = a 2'-deoxyribonucleoside 5'-triphosphate + ADP. It carries out the reaction a ribonucleoside 5'-diphosphate + ATP = a ribonucleoside 5'-triphosphate + ADP. Functionally, major role in the synthesis of nucleoside triphosphates other than ATP. The ATP gamma phosphate is transferred to the NDP beta phosphate via a ping-pong mechanism, using a phosphorylated active-site intermediate. In Prochlorococcus marinus (strain SARG / CCMP1375 / SS120), this protein is Nucleoside diphosphate kinase.